Consider the following 281-residue polypeptide: UPF0294 protein VP2298 (281 aa).

The protein belongs to the UPF0294 family.

It is found in the cytoplasm. This Vibrio parahaemolyticus serotype O3:K6 (strain RIMD 2210633) protein is UPF0294 protein VP2298.